The sequence spans 460 residues: Centrosomal protein CEP57L1 (460 aa).

Residue serine 49 is modified to Phosphoserine. Coiled coils occupy residues 51–228 and 317–384; these read NSQA…EISK and ISIC…LKKH. Residues 399 to 410 show a composition bias toward polar residues; sequence KMSEASGIQQED. The interval 399–423 is disordered; the sequence is KMSEASGIQQEDSYPKGSKNIKNSP.

This sequence belongs to the translokin family.

The protein resides in the cytoplasm. It localises to the cytoskeleton. It is found in the microtubule organizing center. Its subcellular location is the centrosome. Centrosomal protein which may be required for microtubule attachment to centrosomes. The polypeptide is Centrosomal protein CEP57L1 (CEP57L1) (Homo sapiens (Human)).